The following is a 400-amino-acid chain: DNA alpha-glucosyltransferase (400 aa).

As to quaternary structure, interacts with clamp protein gp45.

The enzyme catalyses Transfers an alpha-D-glucosyl residue from UDP-glucose to a hydroxymethylcytosine residue in DNA.. Its pathway is genetic information processing; DNA modification. Functionally, catalyzes the transfer of glucose from uridine diphosphoglucose to 5-hydroxymethyl cytosine of T4 DNA to yield glucosyl 5-hydroxymethyl cytosine (glc-HMC). This DNA process seems to occur immediately after DNA synthesis since the DNA alpha-glucosyltransferase interacts with the clamp protein gp45. The glc-HMC modification protects the phage genome against its own nucleases and the host restriction endonuclease system. The glc-HMC modification also protects against the host CRISPR-Cas9 defense system. This Escherichia coli (Bacteriophage T4) protein is DNA alpha-glucosyltransferase (agt).